Reading from the N-terminus, the 624-residue chain is D-3-phosphoglycerate dehydrogenase 2, chloroplastic (624 aa).

The N-terminal 49 residues, 1 to 49 (MAFSSSCSSVKAVNSRWTSPSPSPSSRFAVLPAFLHRRYATSVKLTAIS), are a transit peptide targeting the chloroplast. Serine 71 carries the phosphoserine modification. Residues 231-232 (KV), aspartate 251, 310-312 (VAR), and aspartate 336 each bind NAD(+). The active site involves arginine 312. Residue glutamate 341 is part of the active site. The active-site Proton donor is histidine 360. Residue 360–363 (HLGA) participates in NAD(+) binding. In terms of domain architecture, ACT spans 552 to 624 (LILCRQVDQP…AIEEFVFLKL (73 aa)).

This sequence belongs to the D-isomer specific 2-hydroxyacid dehydrogenase family. As to expression, ubiquitous, but highly expressed in roots and in dark-grown leaf tissues. Expressed in the vasculature, stigma, anther filaments and shoot apical meristem. Not detected in the root meristem or in embryo.

Its subcellular location is the plastid. It is found in the chloroplast. The catalysed reaction is (2R)-3-phosphoglycerate + NAD(+) = 3-phosphooxypyruvate + NADH + H(+). It functions in the pathway amino-acid biosynthesis; L-serine biosynthesis; L-serine from 3-phospho-D-glycerate: step 1/3. Its activity is regulated as follows. Inhibited by 90 uM 3-phosphonooxypyruvate, but not by Ser, Thr, Val, Gly Trp, O-acetyl-L-Ser and Cys. Functionally, involved in the plastidial phosphorylated pathway of serine biosynthesis (PPSB). The chain is D-3-phosphoglycerate dehydrogenase 2, chloroplastic (PGDH2) from Arabidopsis thaliana (Mouse-ear cress).